Reading from the N-terminus, the 396-residue chain is Non-homologous end joining protein Ku (396 aa).

The Ku domain occupies 9 to 189; that stretch reads ISFGLVSIPV…DVAVRPQELS (181 aa). Residues 278 to 288 are compositionally biased toward low complexity; sequence DGDAGPAAAGV. A disordered region spans residues 278–396; the sequence is DGDAGPAAAG…SKTPPTRRSA (119 aa). Over residues 294–312 the composition is skewed to basic and acidic residues; the sequence is DDKASDDKASDDKASDGRR. A compositionally biased stretch (polar residues) spans 315-336; the sequence is RTSSVKGASSAPGTRSTARKTP. Residues 337–396 are compositionally biased toward low complexity; it reads SSTRSTAKTNAATKTPPAKTSAAKASAAKTSAAKATSSRTAPKTAPRTPTSKTPPTRRSA.

Belongs to the prokaryotic Ku family. Homodimer. Interacts with LigD.

With LigD forms a non-homologous end joining (NHEJ) DNA repair enzyme, which repairs dsDNA breaks with reduced fidelity. Binds linear dsDNA with 5'- and 3'- overhangs but not closed circular dsDNA nor ssDNA. Recruits and stimulates the ligase activity of LigD. The polypeptide is Non-homologous end joining protein Ku (Frankia casuarinae (strain DSM 45818 / CECT 9043 / HFP020203 / CcI3)).